Here is a 644-residue protein sequence, read N- to C-terminus: Exoribonuclease 2 (644 aa).

Positions 189 to 516 constitute an RNB domain; that stretch reads REDLTALNFV…NHRLLKAMIT (328 aa). The S1 motif domain occupies 561–643; the sequence is DTRFTAEIID…ETRNVIARPV (83 aa).

It belongs to the RNR ribonuclease family. RNase II subfamily.

The protein resides in the cytoplasm. The catalysed reaction is Exonucleolytic cleavage in the 3'- to 5'-direction to yield nucleoside 5'-phosphates.. Functionally, involved in mRNA degradation. Hydrolyzes single-stranded polyribonucleotides processively in the 3' to 5' direction. This Yersinia pestis bv. Antiqua (strain Antiqua) protein is Exoribonuclease 2.